We begin with the raw amino-acid sequence, 128 residues long: Translation initiation factor 5A (128 aa).

Lysine 35 is subject to Hypusine.

The protein belongs to the eIF-5A family.

Its subcellular location is the cytoplasm. Its function is as follows. Functions by promoting the formation of the first peptide bond. The polypeptide is Translation initiation factor 5A (eif5a) (Archaeoglobus fulgidus (strain ATCC 49558 / DSM 4304 / JCM 9628 / NBRC 100126 / VC-16)).